The sequence spans 208 residues: Ciliary-associated calcium-binding coiled-coil protein 1 (208 aa).

Testis-specific. Expressed in spermatocytes and round spermatids (at protein level).

The protein localises to the cytoplasm. The protein resides in the cytoskeleton. It is found in the microtubule organizing center. Its subcellular location is the centrosome. It localises to the cell projection. The protein localises to the cilium. The protein resides in the flagellum. In terms of biological role, calcium-binding protein. May be involved in the control of sperm flagellar movement. In Mus musculus (Mouse), this protein is Ciliary-associated calcium-binding coiled-coil protein 1.